Here is a 151-residue protein sequence, read N- to C-terminus: 3-hydroxyacyl-[acyl-carrier-protein] dehydratase FabZ (151 aa).

The active site involves histidine 57.

The protein belongs to the thioester dehydratase family. FabZ subfamily.

Its subcellular location is the cytoplasm. The enzyme catalyses a (3R)-hydroxyacyl-[ACP] = a (2E)-enoyl-[ACP] + H2O. Involved in unsaturated fatty acids biosynthesis. Catalyzes the dehydration of short chain beta-hydroxyacyl-ACPs and long chain saturated and unsaturated beta-hydroxyacyl-ACPs. The chain is 3-hydroxyacyl-[acyl-carrier-protein] dehydratase FabZ from Prochlorococcus marinus (strain SARG / CCMP1375 / SS120).